A 127-amino-acid polypeptide reads, in one-letter code: Large ribosomal subunit protein bL12 (127 aa).

It belongs to the bacterial ribosomal protein bL12 family. As to quaternary structure, homodimer. Part of the ribosomal stalk of the 50S ribosomal subunit. Forms a multimeric L10(L12)X complex, where L10 forms an elongated spine to which 2 to 4 L12 dimers bind in a sequential fashion. Binds GTP-bound translation factors.

Its function is as follows. Forms part of the ribosomal stalk which helps the ribosome interact with GTP-bound translation factors. Is thus essential for accurate translation. This Streptomyces virginiae (Streptomyces cinnamonensis) protein is Large ribosomal subunit protein bL12.